The primary structure comprises 64 residues: MGNIRQTNIKRIAFQLLENHRDVFTKDFETNKALVTKYTTIESKVIRNRVAGYVTRKVARMKVY.

It belongs to the eukaryotic ribosomal protein eS17 family.

The polypeptide is Small ribosomal subunit protein eS17 (Methanosarcina barkeri (strain Fusaro / DSM 804)).